Reading from the N-terminus, the 546-residue chain is Chaperonin GroEL (546 aa).

ATP is bound by residues T30–P33, K51, D87–T91, G415, and D495.

Belongs to the chaperonin (HSP60) family. In terms of assembly, forms a cylinder of 14 subunits composed of two heptameric rings stacked back-to-back. Interacts with the co-chaperonin GroES.

It localises to the cytoplasm. The catalysed reaction is ATP + H2O + a folded polypeptide = ADP + phosphate + an unfolded polypeptide.. Together with its co-chaperonin GroES, plays an essential role in assisting protein folding. The GroEL-GroES system forms a nano-cage that allows encapsulation of the non-native substrate proteins and provides a physical environment optimized to promote and accelerate protein folding. This is Chaperonin GroEL from Brucella anthropi (strain ATCC 49188 / DSM 6882 / CCUG 24695 / JCM 21032 / LMG 3331 / NBRC 15819 / NCTC 12168 / Alc 37) (Ochrobactrum anthropi).